Here is a 633-residue protein sequence, read N- to C-terminus: Glutamyl-tRNA(Gln) amidotransferase subunit E (633 aa).

Positions 414 to 437 are disordered; that stretch reads ALPDGNTEYMRPLPGKARMYPETD.

It belongs to the GatB/GatE family. GatE subfamily. As to quaternary structure, heterodimer of GatD and GatE.

It catalyses the reaction L-glutamyl-tRNA(Gln) + L-glutamine + ATP + H2O = L-glutaminyl-tRNA(Gln) + L-glutamate + ADP + phosphate + H(+). Its function is as follows. Allows the formation of correctly charged Gln-tRNA(Gln) through the transamidation of misacylated Glu-tRNA(Gln) in organisms which lack glutaminyl-tRNA synthetase. The reaction takes place in the presence of glutamine and ATP through an activated gamma-phospho-Glu-tRNA(Gln). The GatDE system is specific for glutamate and does not act on aspartate. In Pyrococcus abyssi (strain GE5 / Orsay), this protein is Glutamyl-tRNA(Gln) amidotransferase subunit E.